The primary structure comprises 513 residues: Zinc finger CCCH-type with G patch domain-containing protein (513 aa).

The C3H1-type zinc finger occupies 155–178 (PCSYYLEGECRFDEAKCRFSHGAL). Residues 252–261 (DQDEDDELSS) are compositionally biased toward acidic residues. The disordered stretch occupies residues 252–283 (DQDEDDELSSEESNSSMNDNSSDEAESDMDDL). A compositionally biased stretch (low complexity) spans 262–271 (EESNSSMNDN). Residues 272-283 (SSDEAESDMDDL) are compositionally biased toward acidic residues. The G-patch domain occupies 312–358 (TRGIGSKLMEKMGYIHGTGLGSDGRGIVTPVSAQILPQGRSLDACME). Positions 478-495 (VQMQSHKQELATLQAQER) are enriched in polar residues. Residues 478–513 (VQMQSHKQELATLQAQERSLSKEQQTRKSKNKMFEF) are disordered. Residues 496–513 (SLSKEQQTRKSKNKMFEF) are compositionally biased toward basic and acidic residues.

The protein localises to the nucleus. In terms of biological role, transcription repressor. The protein is Zinc finger CCCH-type with G patch domain-containing protein of Drosophila melanogaster (Fruit fly).